The following is a 366-amino-acid chain: MNNNYHIAVLPGDGIGPETTRQVYKILNVIKKQFQINIVTTEHKIGGDAINSEGTPFPKSTLKYCEQSNAILFGAVGGPQWTHLKGSESPEQGALLALRKHFNLFANLRPIYLADELKELSPLNINMIPNGIDIIFVRELTGGIYFGQPKGRSGTGLNEYAFDTAVYHRFEIERIANIAFKLAQKRRKRVSSIDKANVLHTSMLWREVVSHLAKNYPDVELEHLYIDNASMQLINNPSKFDIILCPNLFGDILSDECAMISGSIGMLPSASINEHNFGLYEPAGGSAPDIAEKNIANPIAHILSIALLFRYSLKLDHIAIKIEKAVSQALMLGYRTIDIAKKHEKSISTNEMGDIIAALIKNEREK.

78–91 provides a ligand contact to NAD(+); that stretch reads GPQWTHLKGSESPE. Substrate is bound by residues arginine 99, arginine 109, arginine 138, and aspartate 227. Mg(2+) contacts are provided by aspartate 227, aspartate 251, and aspartate 255. An NAD(+)-binding site is contributed by 285 to 297; sequence GSAPDIAEKNIAN.

This sequence belongs to the isocitrate and isopropylmalate dehydrogenases family. LeuB type 1 subfamily. As to quaternary structure, homodimer. Mg(2+) serves as cofactor. Requires Mn(2+) as cofactor.

It localises to the cytoplasm. It catalyses the reaction (2R,3S)-3-isopropylmalate + NAD(+) = 4-methyl-2-oxopentanoate + CO2 + NADH. It participates in amino-acid biosynthesis; L-leucine biosynthesis; L-leucine from 3-methyl-2-oxobutanoate: step 3/4. Its function is as follows. Catalyzes the oxidation of 3-carboxy-2-hydroxy-4-methylpentanoate (3-isopropylmalate) to 3-carboxy-4-methyl-2-oxopentanoate. The product decarboxylates to 4-methyl-2 oxopentanoate. This chain is 3-isopropylmalate dehydrogenase, found in Blochmanniella pennsylvanica (strain BPEN).